Consider the following 265-residue polypeptide: MSWDDAGNDDAVLMDSWDAEVDFAGDEPILDSWDEEPKAKKEAAKPKPKPKAGGKKNAKGEEKKEQVLAIDELDPQTRKELMKKAELESDLNNAADLLGDLEMAEEHPRARAMQKEQELAAQAALLRPAMTKDTPIEDHPLFKAETKKEYQDLRKALATAIVTMHEKSSLNYSSSLAIDLIRDVSKPMSIENIRQTVATLNILIKDKEKAERQARLARVKGGTATGGAGKKKAKAKTNLGGAFKKDQDFDVDDINYDDFGADDFM.

Residues 24-34 are compositionally biased toward acidic residues; it reads AGDEPILDSWD. The interval 24–74 is disordered; that stretch reads AGDEPILDSWDEEPKAKKEAAKPKPKPKAGGKKNAKGEEKKEQVLAIDELD. The segment covering 35–45 has biased composition (basic and acidic residues); it reads EEPKAKKEAAK. The span at 46-57 shows a compositional bias: basic residues; sequence PKPKPKAGGKKN. Coiled-coil stretches lie at residues 78–106 and 190–220; these read RKELMKKAELESDLNNAADLLGDLEMAEE and IENIRQTVATLNILIKDKEKAERQARLARVK.

This sequence belongs to the eIF-3 subunit J family. Component of the eukaryotic translation initiation factor 3 (eIF-3) complex.

It localises to the cytoplasm. In terms of biological role, component of the eukaryotic translation initiation factor 3 (eIF-3) complex, which is involved in protein synthesis of a specialized repertoire of mRNAs and, together with other initiation factors, stimulates binding of mRNA and methionyl-tRNAi to the 40S ribosome. The eIF-3 complex specifically targets and initiates translation of a subset of mRNAs involved in cell proliferation. The polypeptide is Eukaryotic translation initiation factor 3 subunit J (Candida glabrata (strain ATCC 2001 / BCRC 20586 / JCM 3761 / NBRC 0622 / NRRL Y-65 / CBS 138) (Yeast)).